The following is a 789-amino-acid chain: Mitochondrial inner membrane m-AAA protease component AFG3L1 (789 aa).

Residues 1–70 (MLLRLVGAAG…KLTSFSPRLY (70 aa)) constitute a mitochondrion transit peptide. Residues 81-121 (FKNKKNRKSASPGNSVPPKKEPKNAGPGGDGGNRGGKGDDF) are disordered. The segment covering 106-115 (GPGGDGGNRG) has biased composition (gly residues). 2 helical membrane-spanning segments follow: residues 139 to 158 (FRSL…YFYF) and 246 to 264 (FLRS…LYAM). Residues Val-302, Ala-303, Thr-344, Gly-345, Lys-346, Thr-347, Leu-348, and His-482 each contribute to the ATP site. Residue His-566 coordinates Zn(2+). Residue Glu-567 is part of the active site. Residues His-570 and Asp-641 each contribute to the Zn(2+) site. The tract at residues 749 to 789 (EEFVEGTGSLEEDTSLPEGLKDWNKGREEGGTERGLQESPV) is disordered. Over residues 767-789 (GLKDWNKGREEGGTERGLQESPV) the composition is skewed to basic and acidic residues.

In the N-terminal section; belongs to the AAA ATPase family. The protein in the C-terminal section; belongs to the peptidase M41 family. Homooligomer. Forms heterohexamers with Spg7 and Afg3l1. The m-AAA protease is either composed of homohexamers of Afg3l2 or heterohexamers of Afg3l1, Afg3l2 and/or Spg7. Zn(2+) serves as cofactor.

It localises to the mitochondrion inner membrane. The catalysed reaction is ATP + H2O = ADP + phosphate + H(+). Catalytic component of the m-AAA protease, a protease that plays a key role in proteostasis of inner mitochondrial membrane proteins, and which is essential for axonal and neuron development. Afg3l1 possesses both ATPase and protease activities: the ATPase activity is required to unfold substrates, threading them into the internal proteolytic cavity for hydrolysis into small peptide fragments. The m-AAA protease exerts a dual role in the mitochondrial inner membrane: it mediates the processing of specific regulatory proteins and ensures protein quality control by degrading misfolded polypeptides. Required for SPG7 maturation into its active mature form after SPG7 cleavage by mitochondrial-processing peptidase (MPP). This chain is Mitochondrial inner membrane m-AAA protease component AFG3L1, found in Mus musculus (Mouse).